The primary structure comprises 714 residues: Phosphate acetyltransferase (714 aa).

The tract at residues alanine 390–glutamine 714 is phosphate acetyltransferase.

The protein in the N-terminal section; belongs to the CobB/CobQ family. It in the C-terminal section; belongs to the phosphate acetyltransferase and butyryltransferase family. As to quaternary structure, homohexamer.

It is found in the cytoplasm. It carries out the reaction acetyl-CoA + phosphate = acetyl phosphate + CoA. The catalysed reaction is propanoyl-CoA + phosphate = propanoyl phosphate + CoA. The protein operates within metabolic intermediate biosynthesis; acetyl-CoA biosynthesis; acetyl-CoA from acetate: step 2/2. With respect to regulation, allosterically inhibited by NADH. In terms of biological role, involved in acetate metabolism. Catalyzes the reversible interconversion of acetyl-CoA and acetyl phosphate. The direction of the overall reaction changes depending on growth conditions. Required for acetate recapture but not for acetate excretion when this organism is grown on ethanolamine (EA); is unable to complement an eutD deletion during growth on EA. Works with proprionate kinase PduW to capture exogenous propionate and regenerate propionyl-CoA during degradation of propionate and 1,2-propanediol (1,2-PD). The polypeptide is Phosphate acetyltransferase (pta) (Salmonella typhimurium (strain LT2 / SGSC1412 / ATCC 700720)).